A 230-amino-acid polypeptide reads, in one-letter code: tRNA pseudouridine synthase B (230 aa).

Catalysis depends on Asp45, which acts as the Nucleophile.

Belongs to the pseudouridine synthase TruB family. Type 1 subfamily.

The catalysed reaction is uridine(55) in tRNA = pseudouridine(55) in tRNA. In terms of biological role, responsible for synthesis of pseudouridine from uracil-55 in the psi GC loop of transfer RNAs. The chain is tRNA pseudouridine synthase B from Endomicrobium trichonymphae.